Reading from the N-terminus, the 574-residue chain is FAD-linked oxidoreductase penH (574 aa).

The first 25 residues, 1–25, serve as a signal peptide directing secretion; sequence MLPRALTLSALLALLLAIYLALAPA. Residues Asn48, Asn107, Asn193, Asn368, and Asn385 are each glycosylated (N-linked (GlcNAc...) asparagine). The FAD-binding PCMH-type domain occupies 121-305; the sequence is HQGRIPLYAA…VRVTMRTYPD (185 aa).

This sequence belongs to the oxygen-dependent FAD-linked oxidoreductase family. Requires FAD as cofactor.

The enzyme catalyses peniprequinolone + A = yaequinolone E + AH2. It functions in the pathway secondary metabolite biosynthesis. Its pathway is alkaloid biosynthesis. The protein operates within mycotoxin biosynthesis. Functionally, FAD-linked oxidoreductase; part of the gene cluster that mediates the biosynthesis of penigequinolones, potent insecticidal alkaloids that contain a highly modified 10-carbon prenyl group. The first stage is catalyzed by the nonribosomal peptide synthetase penN that condenses anthranilic acid and O-methyl-L-tyrosine to produce 4'-methoxycyclopeptin. 4'-methoxycyclopeptin is then converted to 4'-methoxydehydrocyclopeptin by the ketoglutarate-dependent dioxygenase penM through dehydrogenation to form a double bond between C-alpha and C-beta of the O-methyltyrosine side chain. PenM also converts its first product methoxydehydrocyclopeptin to 4'-methoxycyclopenin. The following conversion of 4'methoxycyclopenin into 4'-methoxyviridicatin is catalyzed by the cyclopenase penL. 4'-methoxyviridicatin is the precursor of quinolone natural products, and is further converted to quinolinone B. The prenyltransferase penI then catalyzes the canonical Friedel-Crafts alkylation of quinolinone B with dimethylallyl cation to yield dimethylallyl quinolone, which is subjected to FAD-dependent dehydrogenation by the FAD-linked oxidoreductase penH to yield conjugated aryl diene. The delta(3') double bond then serves as the site of the second alkylation with DMAPP catalyzed by the prenyltransferase penG to yield a carbenium ion intermediate, which can be attacked by H(2)O to yield a styrenyl quinolone containing a C3'-hydroxyprenyl chain, or undergo cyclization to yield yaequinolones J1 and J2. The conversion of the styrenyl quinolone into the tetrahydrofuran-containing yaequinolone C is performed by the FAD-dependent monooxygenase penE and involves epoxidation of the terminal C7'-C8' olefin, followed by epoxide ring opening initiated by the C3' hydroxyl group. The predicted cysteine hydrolase penJ acts as an epoxide hydrolase that enhances the rate of the 5-exo-tet cyclization step, increasing the yield of yaequinolone C. PenF catalyzes the cationic rearrangement of the epoxide formed by penE (before ring opening to produce yaequinolone C) into yaequinolone D. Finally, the short-chain dehydrogenase/reductase (SDR)-like reductase penD, catalyzes both the dehydration of yaequinolone D and the reduction of the resulting oxonium to yield penigequinolone. This Penicillium thymicola protein is FAD-linked oxidoreductase penH.